The primary structure comprises 302 residues: Glycine--tRNA ligase alpha subunit (302 aa).

Belongs to the class-II aminoacyl-tRNA synthetase family. As to quaternary structure, tetramer of two alpha and two beta subunits.

It localises to the cytoplasm. The enzyme catalyses tRNA(Gly) + glycine + ATP = glycyl-tRNA(Gly) + AMP + diphosphate. This is Glycine--tRNA ligase alpha subunit from Haemophilus influenzae (strain PittGG).